The primary structure comprises 107 residues: U1-lycotoxin-Ls1h (107 aa).

The N-terminal stretch at 1–20 (MMKVLVVVALLVTLISYSSS) is a signal peptide. The propeptide occupies 21–41 (EGIDDLEADELLSLMANEQTR). 3 disulfide bridges follow: cysteine 44-cysteine 59, cysteine 51-cysteine 68, and cysteine 70-cysteine 84.

This sequence belongs to the neurotoxin 19 (CSTX) family. 04 (U1-Lctx) subfamily. Expressed by the venom gland.

The protein localises to the secreted. The sequence is that of U1-lycotoxin-Ls1h from Lycosa singoriensis (Wolf spider).